Reading from the N-terminus, the 906-residue chain is Patched domain-containing protein 3 (906 aa).

The tract at residues 1-70 (MISSKVAPGE…LGQEAPPPRR (70 aa)) is disordered. Asn148 and Asn235 each carry an N-linked (GlcNAc...) asparagine glycan. Helical transmembrane passes span 338–358 (TVIP…VVSC), 370–390 (VAVF…GLML), 392–412 (LGVP…GVGV), 442–462 (VAVS…TGIT), 476–496 (GTTL…VMAL), 559–579 (FIVV…CFQV), 760–780 (VMIA…HPVC), 782–802 (LWVT…MAFW), 814–834 (LVIC…AFVS), 848–868 (LYLL…GVCV), and 883–903 (IMFL…PVFL). The 158-residue stretch at 339 to 496 (VIPLFHLAYI…ITCFGAVMAL (158 aa)) folds into the SSD domain.

This sequence belongs to the patched family. Expressed in germ cells of the testis (at protein level).

The protein resides in the cell projection. The protein localises to the cilium. It localises to the flagellum membrane. Its subcellular location is the endoplasmic reticulum membrane. Functionally, may play a role in sperm development or sperm function. However, does not appear to have an essential role in spermatogenesis or male fertility. This is Patched domain-containing protein 3 (Ptchd3) from Mus musculus (Mouse).